Reading from the N-terminus, the 175-residue chain is uncharacterized protein (175 aa).

It to yeast YER187w.

This is an uncharacterized protein from Saccharomyces cerevisiae (strain ATCC 204508 / S288c) (Baker's yeast).